The following is a 370-amino-acid chain: Chorismate synthase (370 aa).

Residue Arg-48 participates in NADP(+) binding. FMN contacts are provided by residues Arg-125–Ser-127, Asn-241–Ala-242, Gly-285, Lys-300–Ser-304, and Arg-326.

This sequence belongs to the chorismate synthase family. Homotetramer. FMNH2 is required as a cofactor.

It catalyses the reaction 5-O-(1-carboxyvinyl)-3-phosphoshikimate = chorismate + phosphate. It functions in the pathway metabolic intermediate biosynthesis; chorismate biosynthesis; chorismate from D-erythrose 4-phosphate and phosphoenolpyruvate: step 7/7. Catalyzes the anti-1,4-elimination of the C-3 phosphate and the C-6 proR hydrogen from 5-enolpyruvylshikimate-3-phosphate (EPSP) to yield chorismate, which is the branch point compound that serves as the starting substrate for the three terminal pathways of aromatic amino acid biosynthesis. This reaction introduces a second double bond into the aromatic ring system. The polypeptide is Chorismate synthase (Jannaschia sp. (strain CCS1)).